Reading from the N-terminus, the 1175-residue chain is DNA-directed RNA polymerase subunit beta (1175 aa).

The segment at 1142-1175 (PMELSGSDDDEFDQAGASLGINLSRDERSDADIA) is disordered. The span at 1165-1175 (SRDERSDADIA) shows a compositional bias: basic and acidic residues.

This sequence belongs to the RNA polymerase beta chain family. As to quaternary structure, the RNAP catalytic core consists of 2 alpha, 1 beta, 1 beta' and 1 omega subunit. When a sigma factor is associated with the core the holoenzyme is formed, which can initiate transcription.

It catalyses the reaction RNA(n) + a ribonucleoside 5'-triphosphate = RNA(n+1) + diphosphate. DNA-dependent RNA polymerase catalyzes the transcription of DNA into RNA using the four ribonucleoside triphosphates as substrates. This is DNA-directed RNA polymerase subunit beta from Corynebacterium diphtheriae (strain ATCC 700971 / NCTC 13129 / Biotype gravis).